The primary structure comprises 101 residues: MTKKEQSIWRKEMLALMNEDADWYRNEDTERFKRIQELAKKIETASTRQFSSHISKERFEAYQRMGLQFKEIAEEFHITTTALQQWHKDNGYPIYNKNNRK.

Its function is as follows. Might be involved in the expression of prgA, but is not required for activation of the expression of prgB. The protein is Putative regulatory protein PrgT (prgT) of Enterococcus faecalis (strain ATCC 47077 / OG1RF).